The sequence spans 391 residues: MDTFLFTSESVNEGHPDKLCDQVSDAILDACLEQDPESKVACETCTKTNMVMVFGEITTKAKVNYEKIVRDTCRGIGFVSADVGLDADNCKVLVNIEQQSPDIAQGVHGHLTKKPEEIGAGDQGHMFGYATDETPELMPLTHVLATKLGAKLTEVRKNGTCPWLRPDGKTQVTVEYRNEGGAMVPIRVHTVLVSTQHDETVTNEQIAKDLKEHVIKPVIPPQYLDDQTIFHLNPSGRFVIGGPHGDAGLTGRKIIIDTYGGWGAHGGGAFSGKDPTKVDRSGAYIVRQAAKSVVASGLARRCIVQVSYAIGVPEPLSVFVDTYKTGKIPDKDILALIKKNFDFRPGMISINLDLKRGGNFRFQKTAAYGHFGRDDPDFSWETVKQLKPEKA.

E9 provides a ligand contact to Mg(2+). H15 lines the ATP pocket. K(+) is bound at residue E43. L-methionine-binding residues include E56 and Q99. Residues 167–169 (DGK), 235–238 (SGRF), D246, 252–253 (RK), A269, K273, and K277 each bind ATP. Position 246 (D246) interacts with L-methionine. An L-methionine-binding site is contributed by K277.

Belongs to the AdoMet synthase family. Homotetramer. Mn(2+) serves as cofactor. It depends on Mg(2+) as a cofactor. Co(2+) is required as a cofactor. The cofactor is K(+).

It localises to the cytoplasm. It catalyses the reaction L-methionine + ATP + H2O = S-adenosyl-L-methionine + phosphate + diphosphate. Its pathway is amino-acid biosynthesis; S-adenosyl-L-methionine biosynthesis; S-adenosyl-L-methionine from L-methionine: step 1/1. Its function is as follows. Catalyzes the formation of S-adenosylmethionine from methionine and ATP. The reaction comprises two steps that are both catalyzed by the same enzyme: formation of S-adenosylmethionine (AdoMet) and triphosphate, and subsequent hydrolysis of the triphosphate. This is S-adenosylmethionine synthase 1 (METK1) from Vitis vinifera (Grape).